A 654-amino-acid polypeptide reads, in one-letter code: MAGSTIELRGLRREFPSGEATVVALQDLDLTIEPGEMVAIMGASGSGKSTLMNILGCLDRPTSGSYRIAGRETSSLEADELSALRREHFGFIFQRYHLLPALSALGNVEIPAIYAGQPGEARRARAGELLARLGLADRSGHRPNQLSGGQQQRVSIARALMNGADVILADEPTGALDQRSGTEVLQILDELNRDGKTVIIVTHDASVAARAKRVIELRDGVVVADRLTSPEAARRAGDAPTRQPPATPRWNWRREYDRISEATRIAVLAMAAHRLRSFLTMLGIIIGIASVVFVVAVGDAAKRKVLADISSLGTNTIEIFPGKDMGDVRSSKIKTLVAADARALAQQPYIDGVTPTVSTTSTLRYGGLEANALVNGVGDQYFDVKGTKLASGRFFDASGLRDIVQDVVIDEKTRQTFFADVAGGAVGKVILIGKVPCRIVGVMQQQQSGFGSNQNLSVYLPYTTVQARFLGNSSLRSILLKVSDTVATADAEQDVTRFLTLRHRVKDFVILNTDDIRKTITSTTGTLTLMIAAIAVISLVVGGIGVMNIMLVSVSERVGEIGVRMAVGARRSDILQQFLIEAVVVCLIGGGLGVGVAFGLAALFNLVVPMFPLSLSGTSIAAAFVCSTGIGIVFGYLPARQASFLDPLAALSRD.

Residues 6-244 (IELRGLRREF…RAGDAPTRQP (239 aa)) form the ABC transporter domain. 42-49 (GASGSGKS) provides a ligand contact to ATP. The next 4 helical transmembrane spans lie at 278-298 (FLTM…VAVG), 527-547 (LTLM…IGVM), 584-604 (VVCL…AALF), and 619-639 (SIAA…YLPA).

Belongs to the ABC transporter superfamily. Macrolide exporter (TC 3.A.1.122) family. Homodimer.

The protein resides in the cell inner membrane. Functionally, non-canonical ABC transporter that contains transmembrane domains (TMD), which form a pore in the inner membrane, and an ATP-binding domain (NBD), which is responsible for energy generation. Confers resistance against macrolides. This Rhodopseudomonas palustris (strain HaA2) protein is Macrolide export ATP-binding/permease protein MacB.